The chain runs to 347 residues: Large ribosomal subunit protein uL10 (347 aa).

The segment at 310–347 (ATVAAPAAEEEKKEEEPEEEEEDHAEEDGMAGLGALFG) is disordered. Acidic residues predominate over residues 325–338 (EPEEEEEDHAEEDG).

The protein belongs to the universal ribosomal protein uL10 family. As to quaternary structure, part of the 50S ribosomal subunit. Forms part of the ribosomal stalk which helps the ribosome interact with GTP-bound translation factors. Forms a heptameric L10(L12)2(L12)2(L12)2 complex, where L10 forms an elongated spine to which the L12 dimers bind in a sequential fashion.

In terms of biological role, forms part of the ribosomal stalk, playing a central role in the interaction of the ribosome with GTP-bound translation factors. In Methanosarcina mazei (strain ATCC BAA-159 / DSM 3647 / Goe1 / Go1 / JCM 11833 / OCM 88) (Methanosarcina frisia), this protein is Large ribosomal subunit protein uL10.